The sequence spans 393 residues: MQFDNIDSALMALKNGETIIVVDDENRENEGDLVAVTEWMNDNTINFMAKEARGLICAPVSKDIAQRLDLVQMVDDNSDIFGTQFTVSIDHVDTTTGISAYERTLTAKKLIDPSSEAKDFNRPGHLFPLVAQDKGVLARNGHTEAAVDLAKLTGAKPAGVICEIMNDDGTMAKGQDLQKFKEKHKLKMITIDDLIEYRKKLEPEIEFKAKVKMPTDFGTFDMYGFKATYTDEEIVVLTKGAIRQHENVRLHSACLTGDIFHSQRCDCGAQLESSMKYINEHGGMIIYLPQEGRGIGLLNKLRAYELIEQGYDTVTANLALGFDEDLRDYHIAAQILKYFNIEHINLLSNNPSKFEGLKQYGIDIAERIEVIVPETVHNHDYMETKKIKMGHLI.

Positions 1–200 (MQFDNIDSAL…IDDLIEYRKK (200 aa)) are DHBP synthase. Residues 27–28 (RE), Asp-32, 139–143 (RNGHT), and Glu-163 each bind D-ribulose 5-phosphate. Position 28 (Glu-28) interacts with Mg(2+). His-142 contributes to the Mg(2+) binding site. The interval 201 to 393 (LEPEIEFKAK…TKKIKMGHLI (193 aa)) is GTP cyclohydrolase II. A GTP-binding site is contributed by 249 to 253 (RLHSA). The Zn(2+) site is built by Cys-254, Cys-265, and Cys-267. GTP-binding positions include Gln-270, 291-293 (EGR), and Thr-313. Catalysis depends on Asp-325, which acts as the Proton acceptor; for GTP cyclohydrolase activity. Arg-327 (nucleophile; for GTP cyclohydrolase activity) is an active-site residue. Positions 348 and 353 each coordinate GTP.

In the N-terminal section; belongs to the DHBP synthase family. The protein in the C-terminal section; belongs to the GTP cyclohydrolase II family. It depends on Mg(2+) as a cofactor. Mn(2+) is required as a cofactor. The cofactor is Zn(2+).

The catalysed reaction is D-ribulose 5-phosphate = (2S)-2-hydroxy-3-oxobutyl phosphate + formate + H(+). It carries out the reaction GTP + 4 H2O = 2,5-diamino-6-hydroxy-4-(5-phosphoribosylamino)-pyrimidine + formate + 2 phosphate + 3 H(+). The protein operates within cofactor biosynthesis; riboflavin biosynthesis; 2-hydroxy-3-oxobutyl phosphate from D-ribulose 5-phosphate: step 1/1. Its pathway is cofactor biosynthesis; riboflavin biosynthesis; 5-amino-6-(D-ribitylamino)uracil from GTP: step 1/4. In terms of biological role, catalyzes the conversion of D-ribulose 5-phosphate to formate and 3,4-dihydroxy-2-butanone 4-phosphate. Catalyzes the conversion of GTP to 2,5-diamino-6-ribosylamino-4(3H)-pyrimidinone 5'-phosphate (DARP), formate and pyrophosphate. This chain is Riboflavin biosynthesis protein RibBA, found in Staphylococcus aureus (strain MRSA252).